The primary structure comprises 228 residues: Probable septum site-determining protein MinC (228 aa).

This sequence belongs to the MinC family. Interacts with MinD and FtsZ.

Cell division inhibitor that blocks the formation of polar Z ring septums. Rapidly oscillates between the poles of the cell to destabilize FtsZ filaments that have formed before they mature into polar Z rings. Prevents FtsZ polymerization. This chain is Probable septum site-determining protein MinC, found in Bacillus cereus (strain B4264).